The primary structure comprises 729 residues: Fatty acid oxidation complex subunit alpha (729 aa).

Residues 1–189 form an enoyl-CoA hydratase/isomerase region; sequence MLYQSETLQL…KIGLVDAVVD (189 aa). A substrate-binding site is contributed by Asp296. Residues 311–729 form a 3-hydroxyacyl-CoA dehydrogenase region; sequence AAPKLAAVLG…LLDVSTNQPA (419 aa). NAD(+) is bound by residues Met324, Asp343, 400–402, Lys407, and Ser429; that span reads VVE. His450 functions as the For 3-hydroxyacyl-CoA dehydrogenase activity in the catalytic mechanism. Position 453 (Asn453) interacts with NAD(+). Residues Asn500 and Tyr660 each coordinate substrate.

The protein in the N-terminal section; belongs to the enoyl-CoA hydratase/isomerase family. In the C-terminal section; belongs to the 3-hydroxyacyl-CoA dehydrogenase family. In terms of assembly, heterotetramer of two alpha chains (FadB) and two beta chains (FadA).

The enzyme catalyses a (3S)-3-hydroxyacyl-CoA + NAD(+) = a 3-oxoacyl-CoA + NADH + H(+). It carries out the reaction a (3S)-3-hydroxyacyl-CoA = a (2E)-enoyl-CoA + H2O. It catalyses the reaction a 4-saturated-(3S)-3-hydroxyacyl-CoA = a (3E)-enoyl-CoA + H2O. The catalysed reaction is (3S)-3-hydroxybutanoyl-CoA = (3R)-3-hydroxybutanoyl-CoA. The enzyme catalyses a (3Z)-enoyl-CoA = a 4-saturated (2E)-enoyl-CoA. It carries out the reaction a (3E)-enoyl-CoA = a 4-saturated (2E)-enoyl-CoA. Its pathway is lipid metabolism; fatty acid beta-oxidation. In terms of biological role, involved in the aerobic and anaerobic degradation of long-chain fatty acids via beta-oxidation cycle. Catalyzes the formation of 3-oxoacyl-CoA from enoyl-CoA via L-3-hydroxyacyl-CoA. It can also use D-3-hydroxyacyl-CoA and cis-3-enoyl-CoA as substrate. This chain is Fatty acid oxidation complex subunit alpha, found in Yersinia pseudotuberculosis serotype O:1b (strain IP 31758).